The primary structure comprises 461 residues: uncharacterized protein (461 aa).

Disordered regions lie at residues 254–273 and 368–414; these read NNNNNNNNNNNNNNNNNNNN and QPSQ…NNNS. Residues 381-413 are compositionally biased toward low complexity; that stretch reads NNNNNNNNNNNNNNNNNNNNNNNNNNNNNNNNN.

This is an uncharacterized protein from Dictyostelium discoideum (Social amoeba).